The chain runs to 659 residues: Exoribonuclease 2 (659 aa).

In terms of domain architecture, RNB spans 189–531 (RENLTALHFV…NHRLIKAVLA (343 aa)). One can recognise an S1 motif domain in the interval 576–658 (NAEFEAEVQD…ATRSIVGEIL (83 aa)).

This sequence belongs to the RNR ribonuclease family. RNase II subfamily.

The protein resides in the cytoplasm. It catalyses the reaction Exonucleolytic cleavage in the 3'- to 5'-direction to yield nucleoside 5'-phosphates.. Functionally, involved in mRNA degradation. Hydrolyzes single-stranded polyribonucleotides processively in the 3' to 5' direction. This is Exoribonuclease 2 from Haemophilus influenzae (strain PittGG).